The primary structure comprises 1172 residues: Ras guanine nucleotide exchange factor W (1172 aa).

Low complexity-rich tracts occupy residues 34–70 (PIYT…LNNL) and 78–87 (NSNSVNNTIS). Disordered stretches follow at residues 34–100 (PIYT…RSNT), 138–162 (KFLD…RIQQ), and 186–246 (FKRS…EIKD). Residues 194–241 (QPPQSQSQQQQQLQLQQQQQQSMPNLSLGNNINSNNNNNNGSENNDIS) show a composition bias toward low complexity. The next 6 membrane-spanning stretches (helical) occupy residues 286–306 (IWLT…DIIG), 320–340 (IMAV…LNLF), 347–367 (FPGT…VTDI), 378–400 (VLSI…ISLI), 432–452 (LTTN…QLLV), and 545–565 (ILHL…NLLI). The stretch at 666–702 (LLGMLNEIDDSLQAAKEKVEEESIQNSILKKDIEDLY) forms a coiled coil. The region spanning 765-903 (DLNVIQYATI…YIDSIHKRKM (139 aa)) is the N-terminal Ras-GEF domain. The 233-residue stretch at 938 to 1170 (DISDIAIQIT…WKMSLSCEQR (233 aa)) folds into the Ras-GEF domain.

It localises to the membrane. Promotes the exchange of Ras-bound GDP by GTP. This chain is Ras guanine nucleotide exchange factor W (gefW), found in Dictyostelium discoideum (Social amoeba).